The following is a 567-amino-acid chain: Glutamine--tRNA ligase (567 aa).

The short motif at 47 to 57 (PEPNGYLHIGH) is the 'HIGH' region element. Residues 48 to 50 (EPN) and 54 to 60 (HIGHAKS) each bind ATP. L-glutamine contacts are provided by Asp-80 and Tyr-225. ATP-binding positions include Thr-244 and 274-275 (RL). The 'KMSKS' region motif lies at 281 to 285 (ITSKR).

The protein belongs to the class-I aminoacyl-tRNA synthetase family. In terms of assembly, monomer.

It localises to the cytoplasm. The enzyme catalyses tRNA(Gln) + L-glutamine + ATP = L-glutaminyl-tRNA(Gln) + AMP + diphosphate. The protein is Glutamine--tRNA ligase of Pseudomonas putida (strain ATCC 47054 / DSM 6125 / CFBP 8728 / NCIMB 11950 / KT2440).